A 206-amino-acid chain; its full sequence is Musculin (206 aa).

A disordered region spans residues 1–115 (MSTGSVSDPE…QSQRNAANAR (115 aa)). Over residues 46–56 (SAEEEDPDGEE) the composition is skewed to acidic residues. A Nuclear localization signal motif is present at residues 71–76 (KRKRPR). A compositionally biased stretch (gly residues) spans 78-92 (AGGGGAGGSAGGGGK). The segment covering 93 to 102 (KPLPAKGSAA) has biased composition (low complexity). Positions 107-159 (SQRNAANARERARMRVLSKAFSRLKTSLPWVPPDTKLSKLDTLRLASSYIAHL) constitute a bHLH domain.

In terms of assembly, efficient DNA binding requires dimerization with another bHLH protein. Binds DNA as a homodimer or a heterodimer. Forms a heterodimer with TCF3. Expressed in lymphoid tissues, B-cell lines and activated B-cells.

The protein resides in the nucleus. In terms of biological role, transcription repressor capable of inhibiting the transactivation capability of TCF3/E47. May play a role in regulating antigen-dependent B-cell differentiation. The protein is Musculin (MSC) of Homo sapiens (Human).